A 644-amino-acid polypeptide reads, in one-letter code: Exoribonuclease 2 (644 aa).

The RNB domain occupies 189-516 (REDLTALDFV…NHRLLKAVIK (328 aa)). Residues 561-643 (DTRFAAEIVD…ETRSIIARPV (83 aa)) form the S1 motif domain.

This sequence belongs to the RNR ribonuclease family. RNase II subfamily.

The protein localises to the cytoplasm. It catalyses the reaction Exonucleolytic cleavage in the 3'- to 5'-direction to yield nucleoside 5'-phosphates.. Its function is as follows. Involved in mRNA degradation. Hydrolyzes single-stranded polyribonucleotides processively in the 3' to 5' direction. The protein is Exoribonuclease 2 of Escherichia coli (strain UTI89 / UPEC).